The primary structure comprises 982 residues: Coatomer subunit beta (982 aa).

4 HEAT repeats span residues 16 to 53 (SGAP…NGEP), 130 to 167 (ELVE…RFPE), 241 to 278 (YDKG…SPTA), and 317 to 352 (LQDS…NQNS).

In terms of assembly, oligomeric complex that consists of at least the alpha, beta, beta', gamma, delta, epsilon and zeta subunits.

The protein localises to the cytoplasm. Its subcellular location is the golgi apparatus membrane. It is found in the cytoplasmic vesicle. It localises to the COPI-coated vesicle membrane. Its function is as follows. The coatomer is a cytosolic protein complex that binds to dilysine motifs and reversibly associates with Golgi non-clathrin-coated vesicles, which further mediate biosynthetic protein transport from the ER, via the Golgi up to the trans Golgi network. Coatomer complex is required for budding from Golgi membranes, and is essential for the retrograde Golgi-to-ER transport of dilysine-tagged proteins. This is Coatomer subunit beta from Trypanosoma brucei brucei.